Here is a 173-residue protein sequence, read N- to C-terminus: Pectinesterase inhibitor 2 (173 aa).

Positions 1–25 (MAAYLTNRVLMSSLMFFVMTGSLNA) are cleaved as a signal peptide. The cysteines at positions 34 and 43 are disulfide-linked. N-linked (GlcNAc...) asparagine glycans are attached at residues asparagine 39 and asparagine 63. A disulfide bridge connects residues cysteine 99 and cysteine 139.

This sequence belongs to the PMEI family. Interacts with PPME1. Highest expression in flowers. Expressed exclusively at the pollen tube tip.

It is found in the secreted. The protein localises to the extracellular space. The protein resides in the apoplast. Functionally, inhibits pectin methylesterase (PME) from flowers, siliques and pollen tube. This Arabidopsis thaliana (Mouse-ear cress) protein is Pectinesterase inhibitor 2.